Reading from the N-terminus, the 109-residue chain is MEVKAIHRGARISAQKTRLVADQIRGLSIERALNVLTFSPKKAAGIVKKVVESAIANAEHNEGADIDELKVKSIYIDKATSLKRFTARAKGRGNRIEKQTCHITVTLGN.

The protein belongs to the universal ribosomal protein uL22 family. In terms of assembly, part of the 50S ribosomal subunit.

In terms of biological role, this protein binds specifically to 23S rRNA; its binding is stimulated by other ribosomal proteins, e.g. L4, L17, and L20. It is important during the early stages of 50S assembly. It makes multiple contacts with different domains of the 23S rRNA in the assembled 50S subunit and ribosome. The globular domain of the protein is located near the polypeptide exit tunnel on the outside of the subunit, while an extended beta-hairpin is found that lines the wall of the exit tunnel in the center of the 70S ribosome. The chain is Large ribosomal subunit protein uL22 from Ralstonia pickettii (strain 12J).